Here is a 294-residue protein sequence, read N- to C-terminus: Large ribosomal subunit protein uL2 (294 aa).

Disordered stretches follow at residues 1 to 37 (MGIR…RPEK) and 228 to 294 (GSVM…RAAQ). Residues 23-37 (ELSRDENGKRPRPEK) are compositionally biased toward basic and acidic residues. Residues 264–285 (KTRKRNKPSNKFIVRGRRRGGR) show a composition bias toward basic residues.

This sequence belongs to the universal ribosomal protein uL2 family. Part of the 50S ribosomal subunit. Forms a bridge to the 30S subunit in the 70S ribosome.

Its function is as follows. One of the primary rRNA binding proteins. Required for association of the 30S and 50S subunits to form the 70S ribosome, for tRNA binding and peptide bond formation. It has been suggested to have peptidyltransferase activity; this is somewhat controversial. Makes several contacts with the 16S rRNA in the 70S ribosome. This Synechococcus sp. (strain JA-2-3B'a(2-13)) (Cyanobacteria bacterium Yellowstone B-Prime) protein is Large ribosomal subunit protein uL2.